Consider the following 887-residue polypeptide: Chaperone protein ClpB 2 (887 aa).

A Clp R domain is found at 6–147 (PTKFTDKAWE…AATVKAIRGA (142 aa)). Repeat stretches follow at residues 9–73 (FTDK…ARQQ) and 84–147 (CGRS…IRGA). Residues 160–342 (AALEKYGRDL…RRFQQVYIGQ (183 aa)) form an NBD1 region. 207–214 (GEPGVGKT) is a binding site for ATP. The interval 343–559 (PSVEDTISIL…IAEIVAKWTG (217 aa)) is linker. Positions 393 to 535 (IDLVDEAAAK…TEAQLLELQA (143 aa)) form a coiled coil. The interval 569–780 (ERQKLLQLEQ…RIDDVILFHG (212 aa)) is NBD2. 619 to 626 (GPTGVGKT) provides a ligand contact to ATP. A C-terminal region spans residues 781–887 (LGRTELAQIA…TGDRDTVSAS (107 aa)).

This sequence belongs to the ClpA/ClpB family. Homohexamer. The oligomerization is ATP-dependent.

Its subcellular location is the cytoplasm. In terms of biological role, part of a stress-induced multi-chaperone system, it is involved in the recovery of the cell from heat-induced damage, in cooperation with DnaK, DnaJ and GrpE. Acts before DnaK, in the processing of protein aggregates. Protein binding stimulates the ATPase activity; ATP hydrolysis unfolds the denatured protein aggregates, which probably helps expose new hydrophobic binding sites on the surface of ClpB-bound aggregates, contributing to the solubilization and refolding of denatured protein aggregates by DnaK. The protein is Chaperone protein ClpB 2 (clpB2) of Thermosynechococcus vestitus (strain NIES-2133 / IAM M-273 / BP-1).